We begin with the raw amino-acid sequence, 321 residues long: Replication factor C small subunit (321 aa).

46–53 (GPAGVGKT) contributes to the ATP binding site.

The protein belongs to the activator 1 small subunits family. RfcS subfamily. As to quaternary structure, heterohexamer composed of four small subunits (RfcS) and two large subunits (RfcL).

Functionally, part of the RFC clamp loader complex which loads the PCNA sliding clamp onto DNA. The complex possesses DNA-dependent ATPase activity which is further stimulated by PCNA. In conjunction with PCNA stimulates DNA synthesis by PolB, relieving inhibition by replication protein A (RPA). This Methanothermobacter thermautotrophicus (strain ATCC 29096 / DSM 1053 / JCM 10044 / NBRC 100330 / Delta H) (Methanobacterium thermoautotrophicum) protein is Replication factor C small subunit (rfcS).